The following is a 776-amino-acid chain: Protein phosphatase 1 regulatory subunit 21 (776 aa).

Coiled coils occupy residues 4-206, 432-466, and 555-597; these read GDLQ…LKTL, RLHD…TTND, and ESRE…KETL.

In terms of assembly, component of the FERRY complex.

It localises to the early endosome. Functionally, component of the FERRY complex (Five-subunit Endosomal Rab5 and RNA/ribosome intermediary). The FERRY complex directly interacts with mRNAs and RAB5A, and functions as a RAB5A effector involved in the localization and the distribution of specific mRNAs most likely by mediating their endosomal transport. The complex recruits mRNAs and ribosomes to early endosomes through direct mRNA-interaction. Putative regulator of protein phosphatase 1 (PP1) activity. May play a role in the endosomal sorting process or in endosome maturation pathway. The polypeptide is Protein phosphatase 1 regulatory subunit 21 (ppp1r21) (Xenopus laevis (African clawed frog)).